Here is a 167-residue protein sequence, read N- to C-terminus: RNA pyrophosphohydrolase (167 aa).

The Nudix hydrolase domain maps to 7-160 (PYRPCVGVMV…KRRAYEEVVA (154 aa)). A Nudix box motif is present at residues 48 to 69 (GGIDEGEDPLEAACRELYEETG).

This sequence belongs to the Nudix hydrolase family. RppH subfamily. A divalent metal cation serves as cofactor.

In terms of biological role, accelerates the degradation of transcripts by removing pyrophosphate from the 5'-end of triphosphorylated RNA, leading to a more labile monophosphorylated state that can stimulate subsequent ribonuclease cleavage. The chain is RNA pyrophosphohydrolase from Rhizobium meliloti (strain 1021) (Ensifer meliloti).